A 780-amino-acid chain; its full sequence is Catenin beta-1 (780 aa).

Residues 34-56 (GIHSGATTTAPSLSGKGNPEDDD) are disordered. ARM repeat units lie at residues 140–179 (NYQDDAELATRAIPELTKLLNDEDQVVVNKAAVMVHQLSK), 224–263 (REGLLAIFKSGGIPALVKMLGSPVDSVLFYAITTLHNLLL), 266–305 (EGAKMAVRLAGGLQKMVALLNKTNVKFLAITTDCLQILAY), 350–389 (SSNKPAIVEAGGMQALGLHLTDPSQRLVQNCLWTLRNLSD), 399–430 (GLLGTLVQLLGSDDINVVTCAAGILSNLTCNN), 431–472 (YKNK…HLTS), 478–518 (EMAQ…NLAL), 520–561 (PANH…QFVE), 583–622 (IHNRIVIRGLNTIPLFVQLLYSPIENIQRVAAGVLCELAQ), and 624–663 (KEAAEAIEAEGATAPLTELLHSRNEGVATYAAAVLFRMSE). Residues 735–744 (EHEMAGHHPG) show a composition bias toward basic and acidic residues. Residues 735–770 (EHEMAGHHPGPDYPVDGLPDLGHTQDLIDGLPPGDS) are disordered.

The protein belongs to the beta-catenin family. As to quaternary structure, interacts with adnpa. Interacts with cdh1 during oogenesis and in the unfertilized egg. Interacts with ctnna1 and cdh2. In terms of processing, phosphorylation by gsk3b promotes ubiquitination and subsequent degradation by the proteasome. Post-translationally, ubiquitinated when phosphorylated by gsk3b, leading to its degradation. Expressed in the successional lamina, also expressed in both the epithelial and mesenchymal cells of the developing replacement tooth (at protein level). Expressed in the enamel organ as well as in the inner and outer dental epithelium during replacement tooth morphogenesis (at protein level). Expressed in the differentiated, polarized odontoblasts that line the dentine matrix as well as in the inner and outer dental epithelium during tooth cytodifferentiation (at protein level). Expressed in the reduced enamel organ, odontoblasts and weakly at the center of the dental papilla of the functional tooth as well as in the epithelial crypts surrounding the functional tooth (at protein level). Expressed in the liver (at protein level). Expressed at intercalated disks in the heart (at protein level). Expressed in the ovary.

The protein localises to the cytoplasm. It localises to the nucleus. It is found in the cell membrane. The protein resides in the cell junction. Its subcellular location is the adherens junction. Functionally, key downstream component of the canonical Wnt signaling pathway. In the absence of Wnt, forms a complex with axin1, axin2, apc, csnk1a1 and gsk3b that promotes phosphorylation on N-terminal Ser and Thr residues and ubiquitination of ctnnb1 and its subsequent degradation by the proteasome. In the presence of Wnt ligand, ctnnb1 is not ubiquitinated and accumulates in the nucleus, where it acts as a coactivator for transcription factors of the TCF/LEF family, leading to activate Wnt responsive genes. Plays a key role in dorsoventral patterning: in prospective ventral blastomeres, its down-regulation by axin1 and axin2 leads to inhibit the Wnt signaling pathway, while in prospective dorsal blastomeres, degradation of axin results in stabilization and nuclear translocation of ctnnb1. This is Catenin beta-1 from Danio rerio (Zebrafish).